The following is a 309-amino-acid chain: 4-hydroxy-3-methylbut-2-enyl diphosphate reductase (309 aa).

C12 contributes to the [4Fe-4S] cluster binding site. Residues H43 and H77 each contribute to the (2E)-4-hydroxy-3-methylbut-2-enyl diphosphate site. H43 and H77 together coordinate dimethylallyl diphosphate. Positions 43 and 77 each coordinate isopentenyl diphosphate. Residue C99 coordinates [4Fe-4S] cluster. H127 is a (2E)-4-hydroxy-3-methylbut-2-enyl diphosphate binding site. A dimethylallyl diphosphate-binding site is contributed by H127. H127 contacts isopentenyl diphosphate. The active-site Proton donor is the E129. Residue T167 coordinates (2E)-4-hydroxy-3-methylbut-2-enyl diphosphate. C197 contacts [4Fe-4S] cluster. Residues S225, S226, N227, and S269 each coordinate (2E)-4-hydroxy-3-methylbut-2-enyl diphosphate. 4 residues coordinate dimethylallyl diphosphate: S225, S226, N227, and S269. Positions 225, 226, 227, and 269 each coordinate isopentenyl diphosphate.

The protein belongs to the IspH family. It depends on [4Fe-4S] cluster as a cofactor.

It catalyses the reaction isopentenyl diphosphate + 2 oxidized [2Fe-2S]-[ferredoxin] + H2O = (2E)-4-hydroxy-3-methylbut-2-enyl diphosphate + 2 reduced [2Fe-2S]-[ferredoxin] + 2 H(+). It carries out the reaction dimethylallyl diphosphate + 2 oxidized [2Fe-2S]-[ferredoxin] + H2O = (2E)-4-hydroxy-3-methylbut-2-enyl diphosphate + 2 reduced [2Fe-2S]-[ferredoxin] + 2 H(+). Its pathway is isoprenoid biosynthesis; dimethylallyl diphosphate biosynthesis; dimethylallyl diphosphate from (2E)-4-hydroxy-3-methylbutenyl diphosphate: step 1/1. The protein operates within isoprenoid biosynthesis; isopentenyl diphosphate biosynthesis via DXP pathway; isopentenyl diphosphate from 1-deoxy-D-xylulose 5-phosphate: step 6/6. Catalyzes the conversion of 1-hydroxy-2-methyl-2-(E)-butenyl 4-diphosphate (HMBPP) into a mixture of isopentenyl diphosphate (IPP) and dimethylallyl diphosphate (DMAPP). Acts in the terminal step of the DOXP/MEP pathway for isoprenoid precursor biosynthesis. This is 4-hydroxy-3-methylbut-2-enyl diphosphate reductase from Wolbachia pipientis wMel.